The following is a 652-amino-acid chain: Phosphoglucomutase 1, chloroplastic (652 aa).

The N-terminal 84 residues, 1 to 84, are a transit peptide targeting the chloroplast; it reads MAFSAAASAS…LAARRTLRVR (84 aa). The alpha-D-glucose 1,6-bisphosphate site is built by Arg-118 and Ser-211. The Phosphoserine intermediate role is filled by Ser-211. Ser-211, Asp-376, Asp-378, and Asp-380 together coordinate Mg(2+). Ser-211 carries the post-translational modification Phosphoserine. 6 residues coordinate alpha-D-glucose 1,6-bisphosphate: Asp-380, Arg-381, Thr-443, Glu-462, Ser-464, and Lys-475.

It belongs to the phosphohexose mutase family. It depends on Mg(2+) as a cofactor.

It localises to the plastid. The protein resides in the chloroplast. The enzyme catalyses alpha-D-glucose 1-phosphate = alpha-D-glucose 6-phosphate. It carries out the reaction O-phospho-L-seryl-[protein] + alpha-D-glucose 1-phosphate = alpha-D-glucose 1,6-bisphosphate + L-seryl-[protein]. The catalysed reaction is alpha-D-glucose 1,6-bisphosphate + L-seryl-[protein] = O-phospho-L-seryl-[protein] + alpha-D-glucose 6-phosphate. Its activity is regulated as follows. Inhibited by the Calvin cycle intermediates fructose-1,6-bisphosphate and ribulose-1,5-bisphosphate. Functionally, catalyzes the reversible isomerization of alpha-D-glucose 1-phosphate to alpha-D-glucose 6-phosphate. The mechanism proceeds via the intermediate compound alpha-D-glucose 1,6-bisphosphate. This enzyme participates in both the breakdown and synthesis of glucose. Required for sucrose production and accumulation necessary during plant development. Promotes gravitropic responses, negative in shoots but positive in roots, by facilitating starch granules (statoliths) formation. This Marchantia polymorpha (Common liverwort) protein is Phosphoglucomutase 1, chloroplastic.